A 430-amino-acid chain; its full sequence is Probable proton-coupled zinc antiporter SLC30A4 (430 aa).

Residues Met1 to Arg113 are Cytoplasmic-facing. Ser36 carries the post-translational modification Phosphoserine. Residues Leu114 to Met134 form a helical membrane-spanning segment. Residues Ala135–Asp143 lie on the Lumenal side of the membrane. Residues Ala144 to Ser164 form a helical membrane-spanning segment. 2 residues coordinate Zn(2+): His146 and Asp150. The Cytoplasmic portion of the chain corresponds to Ser165 to Arg178. The helical transmembrane segment at Leu179–Leu199 threads the bilayer. At Tyr200 to Asp216 the chain is on the lumenal side. Residues Val217–Asn237 form a helical membrane-spanning segment. Topologically, residues Gln238–Ala275 are cytoplasmic. A zinc binding region spans residues Gly240–His265. The segment at His245 to Asn264 is disordered. A compositionally biased stretch (low complexity) spans His249–His263. A helical membrane pass occupies residues Phe276–Ile296. Positions 278 and 282 each coordinate Zn(2+). The Lumenal portion of the chain corresponds to Arg297–Tyr311. A helical transmembrane segment spans residues Ile312–Ile332. At Leu333–Thr430 the chain is on the cytoplasmic side.

Belongs to the cation diffusion facilitator (CDF) transporter (TC 2.A.4) family. SLC30A subfamily. As to quaternary structure, homodimerization could regulate efficiency for zinc transport. Interacts with TMEM163. As to expression, widely expressed. Highly expressed in the brain and in mammary epithelial cell lines.

Its subcellular location is the endosome membrane. It is found in the late endosome membrane. The protein localises to the lysosome membrane. The catalysed reaction is Zn(2+)(in) + 2 H(+)(out) = Zn(2+)(out) + 2 H(+)(in). Functionally, probable proton-coupled zinc ion antiporter mediating zinc import from cytoplasm potentially into the endocytic compartment. Controls zinc deposition in milk. This is Probable proton-coupled zinc antiporter SLC30A4 from Mus musculus (Mouse).